Reading from the N-terminus, the 89-residue chain is MALTAKTKQELIEEFKTHDSDTGSPEVQVALLTNRITYLTEHFKTHKKDHHSRRGLLKLVGQRRRLLNYLKNKDVQRYRTLIEALGLRK.

This sequence belongs to the universal ribosomal protein uS15 family. In terms of assembly, part of the 30S ribosomal subunit. Forms a bridge to the 50S subunit in the 70S ribosome, contacting the 23S rRNA.

In terms of biological role, one of the primary rRNA binding proteins, it binds directly to 16S rRNA where it helps nucleate assembly of the platform of the 30S subunit by binding and bridging several RNA helices of the 16S rRNA. Its function is as follows. Forms an intersubunit bridge (bridge B4) with the 23S rRNA of the 50S subunit in the ribosome. In Desulfatibacillum aliphaticivorans, this protein is Small ribosomal subunit protein uS15.